An 80-amino-acid polypeptide reads, in one-letter code: Large ribosomal subunit protein bL31B (80 aa).

Belongs to the bacterial ribosomal protein bL31 family. Type B subfamily. Part of the 50S ribosomal subunit.

In Xanthomonas campestris pv. campestris (strain 8004), this protein is Large ribosomal subunit protein bL31B.